A 225-amino-acid chain; its full sequence is Urease accessory protein UreF (225 aa).

Belongs to the UreF family. As to quaternary structure, ureD, UreF and UreG form a complex that acts as a GTP-hydrolysis-dependent molecular chaperone, activating the urease apoprotein by helping to assemble the nickel containing metallocenter of UreC. The UreE protein probably delivers the nickel.

It is found in the cytoplasm. Its function is as follows. Required for maturation of urease via the functional incorporation of the urease nickel metallocenter. This Thermosynechococcus vestitus (strain NIES-2133 / IAM M-273 / BP-1) protein is Urease accessory protein UreF.